We begin with the raw amino-acid sequence, 358 residues long: Probable RNA methyltransferase MXAN_6459 (358 aa).

The Proton acceptor role is filled by Glu-92. In terms of domain architecture, Radical SAM core spans Phe-99–Lys-327. Cys-106 and Cys-333 are disulfide-bonded. 3 residues coordinate [4Fe-4S] cluster: Cys-113, Cys-117, and Cys-120. S-adenosyl-L-methionine-binding positions include Gly-160–Glu-161, Ser-192, Ser-215–Thr-217, and Asp-289. The active-site S-methylcysteine intermediate is Cys-333.

The protein belongs to the radical SAM superfamily. RlmN family. It depends on [4Fe-4S] cluster as a cofactor.

The protein resides in the cytoplasm. This is Probable RNA methyltransferase MXAN_6459 from Myxococcus xanthus (strain DK1622).